The primary structure comprises 457 residues: Multidrug resistance protein MdtK (457 aa).

The next 12 helical transmembrane spans lie at 11-31 (LLAL…MGVV), 53-73 (IWLP…PVIA), 93-113 (VLAG…GYII), 127-147 (AVNY…FQVM), 160-180 (GMAM…IFIY), 188-208 (LGGV…FFCM), 243-263 (MPVA…ALLV), 276-296 (IALN…AAVT), 316-336 (RTGI…TVVF), 357-377 (LMLL…GSGV), 387-407 (IFFI…YILG), and 418-438 (PAGF…MMMW).

It belongs to the multi antimicrobial extrusion (MATE) (TC 2.A.66.1) family. MdtK subfamily.

The protein resides in the cell inner membrane. Functionally, multidrug efflux pump that functions probably as a Na(+)/drug antiporter. In Cronobacter sakazakii (strain ATCC BAA-894) (Enterobacter sakazakii), this protein is Multidrug resistance protein MdtK.